We begin with the raw amino-acid sequence, 405 residues long: Chalcone synthase (405 aa).

Residue C170 is part of the active site.

Belongs to the thiolase-like superfamily. Chalcone/stilbene synthases family.

It carries out the reaction (E)-4-coumaroyl-CoA + 3 malonyl-CoA + 3 H(+) = 2',4,4',6'-tetrahydroxychalcone + 3 CO2 + 4 CoA. It functions in the pathway secondary metabolite biosynthesis; flavonoid biosynthesis. Its function is as follows. The primary product of this enzyme is 4,2',4',6'-tetrahydroxychalcone (also termed naringenin-chalcone or chalcone) which can under specific conditions spontaneously isomerize into naringenin. The polypeptide is Chalcone synthase (CHS) (Equisetum arvense (Field horsetail)).